The primary structure comprises 390 residues: GTPase Obg (390 aa).

Residues 1 to 159 (MKFIDESLIR…RDLLLELMLL (159 aa)) form the Obg domain. Positions 160–333 (ADVGMLGLPN…LCRDIMDFII (174 aa)) constitute an OBG-type G domain. GTP-binding positions include 166–173 (GLPNAGKS), 191–195 (FTTLV), 213–216 (DIPG), 283–286 (NKID), and 314–316 (SAA). Mg(2+) contacts are provided by Ser-173 and Thr-193. The tract at residues 363–382 (EHQFDDDEDWDDDWSEEDDE) is disordered. Acidic residues predominate over residues 366–382 (FDDDEDWDDDWSEEDDE).

This sequence belongs to the TRAFAC class OBG-HflX-like GTPase superfamily. OBG GTPase family. In terms of assembly, monomer. Mg(2+) is required as a cofactor.

Its subcellular location is the cytoplasm. Functionally, an essential GTPase which binds GTP, GDP and possibly (p)ppGpp with moderate affinity, with high nucleotide exchange rates and a fairly low GTP hydrolysis rate. Plays a role in control of the cell cycle, stress response, ribosome biogenesis and in those bacteria that undergo differentiation, in morphogenesis control. This is GTPase Obg from Haemophilus influenzae (strain ATCC 51907 / DSM 11121 / KW20 / Rd).